Here is a 347-residue protein sequence, read N- to C-terminus: Dihydroorotase (347 aa).

His17 and His19 together coordinate Zn(2+). Substrate is bound by residues His19–Arg21 and Asn45. Positions 103, 140, and 178 each coordinate Zn(2+). Lys103 is modified (N6-carboxylysine). His140 contacts substrate. Residue Leu223 participates in substrate binding. Residue Asp251 coordinates Zn(2+). The active site involves Asp251. His255 and Ala267 together coordinate substrate.

The protein belongs to the metallo-dependent hydrolases superfamily. DHOase family. Class II DHOase subfamily. Homodimer. The cofactor is Zn(2+).

It catalyses the reaction (S)-dihydroorotate + H2O = N-carbamoyl-L-aspartate + H(+). It participates in pyrimidine metabolism; UMP biosynthesis via de novo pathway; (S)-dihydroorotate from bicarbonate: step 3/3. Its function is as follows. Catalyzes the reversible cyclization of carbamoyl aspartate to dihydroorotate. In Pectobacterium carotovorum subsp. carotovorum (strain PC1), this protein is Dihydroorotase.